Here is a 774-residue protein sequence, read N- to C-terminus: Lysyl oxidase homolog 2 (774 aa).

A signal peptide spans 1 to 25 (MERPLCSHLCSCLAVLALLSPLSLA). 4 SRCR domains span residues 58–159 (LRLA…VVCS), 188–302 (IRAI…VSCV), 326–425 (VRLR…VRCN), and 435–544 (LRLN…VACS). Intrachain disulfides connect Cys-84/Cys-148, Cys-97/Cys-158, Cys-128/Cys-138, Cys-218/Cys-291, Cys-231/Cys-301, Cys-265/Cys-275, Cys-351/Cys-414, Cys-364/Cys-424, and Cys-395/Cys-405. Asn-288 carries N-linked (GlcNAc...) asparagine glycosylation. A glycan (N-linked (GlcNAc...) asparagine) is linked at Asn-455. Intrachain disulfides connect Cys-464/Cys-530, Cys-477/Cys-543, and Cys-511/Cys-521. Residues 548 to 751 (PDLVLNAEMV…WMYNCHIGGS (204 aa)) form a lysyl-oxidase like region. Ca(2+) is bound by residues Asp-549 and Leu-550. 4 disulfides stabilise this stretch: Cys-573–Cys-625, Cys-579–Cys-695, Cys-657–Cys-673, and Cys-663–Cys-685. Residues His-626, His-628, and His-630 each contribute to the Cu cation site. Asn-644 carries an N-linked (GlcNAc...) asparagine glycan. The segment at residues 653–689 (KASFCLEDTECEGDIQKNYECANFGDQGITMGCWDMY) is a cross-link (lysine tyrosylquinone (Lys-Tyr)). Tyr-689 carries the 2',4',5'-topaquinone modification. Residues Glu-722, Asp-724, Asn-727, and Asn-728 each contribute to the Ca(2+) site. A disulfide bond links Cys-732 and Cys-746.

This sequence belongs to the lysyl oxidase family. Component of some chromatin repressor complex. Interacts with SNAI1. Interacts with TAF10. Interacts with HSPA5. Interacts with EFEMP2. It depends on Cu cation as a cofactor. The cofactor is lysine tyrosylquinone residue. The lysine tyrosylquinone cross-link (LTQ) is generated by condensation of the epsilon-amino group of a lysine with a topaquinone produced by oxidation of tyrosine. Post-translationally, N-glycosylated. N-glycosylation on Asn-455 and Asn-644 may be essential for proper folding and secretion; may be composed of a fucosylated carbohydrates attached to a trimannose N-linked glycan core.

It localises to the secreted. It is found in the extracellular space. Its subcellular location is the extracellular matrix. The protein resides in the basement membrane. The protein localises to the nucleus. It localises to the chromosome. It is found in the endoplasmic reticulum. The catalysed reaction is L-lysyl-[protein] + O2 + H2O = (S)-2-amino-6-oxohexanoyl-[protein] + H2O2 + NH4(+). Its activity is regulated as follows. Specifically inhibited by a mouse monoclonal antibody AB0023, inhibition occurs in a non-competitive manner. Mediates the post-translational oxidative deamination of lysine residues on target proteins leading to the formation of deaminated lysine (allysine). Acts as a transcription corepressor and specifically mediates deamination of trimethylated 'Lys-4' of histone H3 (H3K4me3), a specific tag for epigenetic transcriptional activation. Shows no activity against histone H3 when it is trimethylated on 'Lys-9' (H3K9me3) or 'Lys-27' (H3K27me3) or when 'Lys-4' is monomethylated (H3K4me1) or dimethylated (H3K4me2). Also mediates deamination of methylated TAF10, a member of the transcription factor IID (TFIID) complex, which induces release of TAF10 from promoters, leading to inhibition of TFIID-dependent transcription. LOXL2-mediated deamination of TAF10 results in transcriptional repression of genes required for embryonic stem cell pluripotency including POU5F1/OCT4, NANOG, KLF4 and SOX2. Involved in epithelial to mesenchymal transition (EMT) via interaction with SNAI1 and participates in repression of E-cadherin CDH1, probably by mediating deamination of histone H3. During EMT, involved with SNAI1 in negatively regulating pericentromeric heterochromatin transcription. SNAI1 recruits LOXL2 to pericentromeric regions to oxidize histone H3 and repress transcription which leads to release of heterochromatin component CBX5/HP1A, enabling chromatin reorganization and acquisition of mesenchymal traits. Interacts with the endoplasmic reticulum protein HSPA5 which activates the IRE1-XBP1 pathway of the unfolded protein response, leading to expression of several transcription factors involved in EMT and subsequent EMT induction. When secreted into the extracellular matrix, promotes cross-linking of extracellular matrix proteins by mediating oxidative deamination of peptidyl lysine residues in precursors to fibrous collagen and elastin. Acts as a regulator of sprouting angiogenesis, probably via collagen IV scaffolding. Acts as a regulator of chondrocyte differentiation, probably by regulating expression of factors that control chondrocyte differentiation. This chain is Lysyl oxidase homolog 2 (LOXL2), found in Pongo abelii (Sumatran orangutan).